A 146-amino-acid chain; its full sequence is MQVLTKRYPKNCLLTVMDRYAAEVHNMEQVVMIPSLLRDVQLSGPGGQAQAEAPDLYTYFTMLKAICVDVDHGLLPREEWQAKVAGSEENGTAETEEVEDESASGELDLEAQFHLHFSSLHHILMHLTEKAQEVTRKYQEMTGQVW.

A disordered region spans residues 83-104 (KVAGSEENGTAETEEVEDESAS). The segment covering 94-104 (ETEEVEDESAS) has biased composition (acidic residues).

Belongs to the SPOT14 family. In terms of assembly, homodimer. Heterodimer with MID1IP1. Interacts with THRB and PLAGL1. Mainly expressed in tissues that synthesize triglycerides.

The protein localises to the nucleus. The protein resides in the cytoplasm. Functionally, plays a role in the regulation of lipogenesis, especially in lactating mammary gland. Important for the biosynthesis of triglycerides with medium-length fatty acid chains. May modulate lipogenesis by interacting with MID1IP1 and preventing its interaction with ACACA. May function as transcriptional coactivator. May modulate the transcription factor activity of THRB. The polypeptide is Thyroid hormone-inducible hepatic protein (THRSP) (Homo sapiens (Human)).